A 216-amino-acid chain; its full sequence is Small ribosomal subunit protein uS3c (216 aa).

Positions 43–115 (FENDWGTLYN…QTRIKVIQVN (73 aa)) constitute a KH type-2 domain.

This sequence belongs to the universal ribosomal protein uS3 family. As to quaternary structure, part of the 30S ribosomal subunit.

It localises to the plastid. The protein localises to the chloroplast. This chain is Small ribosomal subunit protein uS3c (rps3), found in Emiliania huxleyi (Coccolithophore).